Reading from the N-terminus, the 251-residue chain is Probable transcriptional regulatory protein Mflv_3828 (251 aa).

This sequence belongs to the TACO1 family.

It localises to the cytoplasm. The chain is Probable transcriptional regulatory protein Mflv_3828 from Mycolicibacterium gilvum (strain PYR-GCK) (Mycobacterium gilvum (strain PYR-GCK)).